Consider the following 417-residue polypeptide: Equilibrative nucleotide transporter 2 (417 aa).

11 helical membrane-spanning segments follow: residues 20-40 (AVCW…LTIV), 52-72 (PSRI…SVLV), 85-105 (LFGY…NLAT), 109-129 (GGIG…LADA), 144-164 (PEFL…TSGL), 185-205 (LFFA…AYVF), 265-285 (LAVT…GFLS), 292-312 (SLGD…DLVG), 328-348 (CLLI…ITGI), 354-374 (WMIF…VCVI), and 393-413 (LVLY…LWLV).

The protein belongs to the SLC29A/ENT transporter (TC 2.A.57) family. Expressed in leaves and flowers.

The protein localises to the cell membrane. Functionally, may be involved in nucleoside transport. This is Equilibrative nucleotide transporter 2 (ENT2) from Arabidopsis thaliana (Mouse-ear cress).